A 520-amino-acid polypeptide reads, in one-letter code: Protein RCC2 (520 aa).

The segment at 1–78 is disordered; it reads MPRKKGAAWE…RPATAGKAAG (78 aa). Position 14 is a phosphoserine (Ser-14). Position 18 is a phosphothreonine (Thr-18). Residues 22-34 show a composition bias toward basic residues; that stretch reads GPRRRGGPAGRKR. Residues Ser-41, Ser-42, Ser-43, Ser-44, Ser-48, and Ser-49 each carry the phosphoserine modification. A compositionally biased stretch (low complexity) spans 69-78; that stretch reads RPATAGKAAG. Residues Lys-90 and Lys-122 each carry the N6-acetyllysine modification. 7 RCC1 repeats span residues 101–163, 166–217, 219–269, 271–345, 346–399, 401–445, and 446–499; these read KGQL…SLLI, EGKL…ALTD, GSVF…LMDC, GNLY…VLDS, QKRV…AVSE, GGLF…VAAD, and ESTI…VIAR. Lys-291 carries the post-translational modification N6-acetyllysine. The required for interaction with RAC1 stretch occupies residues 316–323; the sequence is KTKDGQIL. Position 340 is a phosphothreonine (Thr-340). Lys-375 is subject to N6-acetyllysine.

Interacts with RAC1. Interacts with nucleotide-free and with GDP and GTP-bound forms of RAC1, with a slight preference for GDP-bound RAC1. Binds preferentially to the nucleotide-free form of RAC1. Interacts with CORO1C. Interacts with microtubules.

It localises to the nucleus. The protein localises to the nucleolus. It is found in the cytoplasm. The protein resides in the cytoskeleton. Its subcellular location is the chromosome. It localises to the centromere. The protein localises to the spindle. It is found in the midbody. The protein resides in the cell membrane. Multifunctional protein that may affect its functions by regulating the activity of small GTPases, such as RAC1 and RALA. Required for normal progress through the cell cycle, both during interphase and during mitosis. Required for the presence of normal levels of MAD2L1, AURKB and BIRC5 on inner centromeres during mitosis, and for normal attachment of kinetochores to mitotic spindles. Required for normal organization of the microtubule cytoskeleton in interphase cells. Functions as a guanine nucleotide exchange factor (GEF) for RALA. Interferes with the activation of RAC1 by guanine nucleotide exchange factors. Prevents accumulation of active, GTP-bound RAC1, and suppresses RAC1-mediated reorganization of the actin cytoskeleton and formation of membrane protrusions. Required for normal cellular responses to contacts with the extracellular matrix of adjacent cells, and for directional cell migration in response to a fibronectin gradient (in vitro). This Mus musculus (Mouse) protein is Protein RCC2 (Rcc2).